Consider the following 286-residue polypeptide: Beta-lactamase TEM (286 aa).

A signal peptide spans 1–23 (MSIQHFRVALIPFFAAFCLPVFA). S68 serves as the catalytic Acyl-ester intermediate. A disulfide bond links C75 and C121. The active-site Proton acceptor is the E166. 232–234 (KSG) contributes to the substrate binding site.

The protein belongs to the class-A beta-lactamase family.

It catalyses the reaction a beta-lactam + H2O = a substituted beta-amino acid. Functionally, TEM-type are the most prevalent beta-lactamases in enterobacteria; they hydrolyze the beta-lactam bond in susceptible beta-lactam antibiotics, thus conferring resistance to penicillins and cephalosporins. TEM-3 and TEM-4 are capable of hydrolyzing cefotaxime and ceftazidime. TEM-5 is capable of hydrolyzing ceftazidime. TEM-6 is capable of hydrolyzing ceftazidime and aztreonam. TEM-8/CAZ-2, TEM-16/CAZ-7 and TEM-24/CAZ-6 are markedly active against ceftazidime. IRT-4 shows resistance to beta-lactamase inhibitors. The chain is Beta-lactamase TEM (bla) from Escherichia coli.